The following is a 250-amino-acid chain: MMSSVTSEIIHTDVSGQRVRPPLTYCNGELGLKNSEDAAYFCLEKFKSFNEVPDFQYIYLTLSLHVPPPTRKYLLKFHKRLLNVCRLCGETGDLVGGRVLVSGVSQKTADIVVSAKSNGEVLYDWSNFFKSTVRVRCRYTIAKLYNNKAAMREIAKQKNWQTTYPNLEAYRKLNDAAKNSKHTPIVSIQTPPPPAPTPNRPDVPASKNVVITQRYQKPVEKIEDSRLETTRISVIPLLSVLLLVIIIILL.

Positions 182 to 205 (HTPIVSIQTPPPPAPTPNRPDVPA) are disordered. A compositionally biased stretch (pro residues) spans 190 to 201 (TPPPPAPTPNRP). Residues 230–250 (TRISVIPLLSVLLLVIIIILL) form a helical membrane-spanning segment.

Belongs to the ascovirus HvAV ORF18 family.

It is found in the membrane. This is an uncharacterized protein from Spodoptera frugiperda ascovirus 1a (SfAV-1a).